A 163-amino-acid chain; its full sequence is Nucleotide-binding protein RER_17110 (163 aa).

This sequence belongs to the YajQ family.

Functionally, nucleotide-binding protein. The protein is Nucleotide-binding protein RER_17110 of Rhodococcus erythropolis (strain PR4 / NBRC 100887).